Here is a 332-residue protein sequence, read N- to C-terminus: MSLDQKGLKKRSVTVAYFFENIGTTHDIKLRRLNSVDEQKRRIFERDLHRPGLALSGFTNLFTYKRVQILGNTETRFLNHLGEEERRQAFDNLVRFKVPCIILTSNNKLQPDLLEMATEQGIPVFVTRHSSTKAIYQVTDFLDDQFSLYQQYHGSMVDVYGVGVLLIGKSGLGKSEIALDLVERGHGLVADDVVVIRRKGESMQLSASRNNIIDHFMEIRGLGVVDVKANFGIRAIRDVKEVLVVAELLEWNKEMEYERLGLDTKSTKVLGVDVPLVQLPIFPGKNITVIIEVVALNVLLKRYSNYVAAEALTDRIKQVIKNDERTEGEIVL.

Active-site residues include His153 and Lys174. Residue 168 to 175 (GKSGLGKS) participates in ATP binding. Ser175 is a Mg(2+) binding site. The active-site Proton acceptor; for phosphorylation activity. Proton donor; for dephosphorylation activity is the Asp192. The important for the catalytic mechanism of both phosphorylation and dephosphorylation stretch occupies residues 217–226 (MEIRGLGVVD). Glu218 is a Mg(2+) binding site. Residue Arg259 is part of the active site. Residues 280–285 (PIFPGK) are important for the catalytic mechanism of dephosphorylation.

The protein belongs to the HPrK/P family. Homohexamer. Mg(2+) is required as a cofactor.

The enzyme catalyses [HPr protein]-L-serine + ATP = [HPr protein]-O-phospho-L-serine + ADP + H(+). The catalysed reaction is [HPr protein]-O-phospho-L-serine + phosphate + H(+) = [HPr protein]-L-serine + diphosphate. Its function is as follows. Catalyzes the ATP- as well as the pyrophosphate-dependent phosphorylation of a specific serine residue in HPr, a phosphocarrier protein of the phosphoenolpyruvate-dependent sugar phosphotransferase system (PTS). HprK/P also catalyzes the pyrophosphate-producing, inorganic phosphate-dependent dephosphorylation (phosphorolysis) of seryl-phosphorylated HPr (P-Ser-HPr). The polypeptide is HPr kinase/phosphorylase (Chlorobium phaeovibrioides (strain DSM 265 / 1930) (Prosthecochloris vibrioformis (strain DSM 265))).